The following is a 458-amino-acid chain: Repulsive guidance molecule A (458 aa).

The signal sequence occupies residues M1–T53. The propeptide at S54–D176 is removed in mature form. Residues H121–R133 are compositionally biased toward polar residues. Positions H121–S149 are disordered. 2 N-linked (GlcNAc...) asparagine glycosylation sites follow: N122 and N167. Cystine bridges form between C153-C234 and C171-C323. N-linked (GlcNAc...) asparagine glycosylation occurs at N397. The GPI-anchor amidated alanine moiety is linked to residue A433. Residues A434 to C458 constitute a propeptide, removed in mature form.

It belongs to the repulsive guidance molecule (RGM) family. In terms of assembly, interacts with NEO1, BMP2 and BMP4. In terms of processing, autocatalytically cleaved at low pH; the two chains remain linked via two disulfide bonds.

The protein localises to the cell membrane. In terms of biological role, member of the repulsive guidance molecule (RGM) family that performs several functions in the developing and adult nervous system. Regulates cephalic neural tube closure, inhibits neurite outgrowth and cortical neuron branching, and the formation of mature synapses. Binding to its receptor NEO1/neogenin induces activation of RHOA-ROCK1/Rho-kinase signaling pathway through UNC5B-ARHGEF12/LARG-PTK2/FAK1 cascade, leading to collapse of the neuronal growth cone and neurite outgrowth inhibition. Furthermore, RGMA binding to NEO1/neogenin leads to HRAS inactivation by influencing HRAS-PTK2/FAK1-AKT1 pathway. It also functions as a bone morphogenetic protein (BMP) coreceptor that may signal through SMAD1, SMAD5, and SMAD8. This chain is Repulsive guidance molecule A (RGMA), found in Macaca fascicularis (Crab-eating macaque).